The chain runs to 529 residues: Na(+)/H(+) antiporter NhaB (529 aa).

A run of 12 helical transmembrane segments spans residues 13–33 (FLGKAPDWYKVAIISFLIINP), 34–54 (IVFFFVDPFVAGWLLVVEFIF), 90–110 (LVANIEVLLLLVFMVAGIYFM), 113–133 (LLLFIFTKILLGIRSKAILSL), 136–156 (CFAAAFLSAFLDALTVIAVVI), 205–225 (LLMHAGVGTALGGVTTMVGEP), 241–261 (FLIRMAPVTLPVFVCGLLTCF), 306–326 (GLIAVWLIVGLALHLAAVGLI), 327–347 (GLSVIILATAFTGVIEEHSLG), 351–371 (EEALPFTALLAVFFSIVAVII), 451–471 (ATPNGQAAFLFLLTSALAPLI), and 479–499 (VIMALPYTIVLALVGLFGIVF).

This sequence belongs to the NhaB Na(+)/H(+) (TC 2.A.34) antiporter family.

It localises to the cell inner membrane. The enzyme catalyses 2 Na(+)(in) + 3 H(+)(out) = 2 Na(+)(out) + 3 H(+)(in). In terms of biological role, na(+)/H(+) antiporter that extrudes sodium in exchange for external protons. This chain is Na(+)/H(+) antiporter NhaB, found in Vibrio vulnificus (strain CMCP6).